The chain runs to 485 residues: Cysteine--tRNA ligase (485 aa).

Residue Cys29 participates in Zn(2+) binding. Positions 31 to 41 match the 'HIGH' region motif; it reads VTVYDHCHIGH. Residues Cys209, His234, and Glu238 each coordinate Zn(2+). Residues 266–270 carry the 'KMSKS' region motif; it reads KMSKS. ATP is bound at residue Lys269.

The protein belongs to the class-I aminoacyl-tRNA synthetase family. As to quaternary structure, monomer. Zn(2+) is required as a cofactor.

The protein resides in the cytoplasm. The enzyme catalyses tRNA(Cys) + L-cysteine + ATP = L-cysteinyl-tRNA(Cys) + AMP + diphosphate. This chain is Cysteine--tRNA ligase, found in Geobacter metallireducens (strain ATCC 53774 / DSM 7210 / GS-15).